The primary structure comprises 152 residues: UPF0735 ACT domain-containing protein CTC_00116 (152 aa).

An ACT domain is found at 76–151; the sequence is IISVTLNHRP…NVIKLDLIAM (76 aa).

The protein belongs to the UPF0735 family.

The polypeptide is UPF0735 ACT domain-containing protein CTC_00116 (Clostridium tetani (strain Massachusetts / E88)).